Consider the following 296-residue polypeptide: Probable redox regulatory protein BQ2027_MB0506C (296 aa).

This sequence belongs to the Rv0495c family.

Functionally, essential for maintaining intracellular redox homeostasis. The sequence is that of Probable redox regulatory protein BQ2027_MB0506C from Mycobacterium bovis (strain ATCC BAA-935 / AF2122/97).